The primary structure comprises 561 residues: Potassium-transporting ATPase potassium-binding subunit (561 aa).

10 helical membrane-spanning segments follow: residues 4 to 24, 65 to 85, 133 to 153, 177 to 197, 253 to 273, 285 to 305, 380 to 400, 417 to 437, 484 to 504, and 528 to 548; these read IVMQDVFFVVLLLVLAVPLGI, AVSVLAFSAVGFVFVMAVLML, IGLTVQNFVSAATGIAVLFAV, LYILLPLSLVLALLLVSQGVV, FTNLIEMLAILLIPVALVVMF, AIMTAMMIVFVIGVVAITISE, GLYGMIGFIILTVFIAGLLVG, MVCLLILVPPLLTLFGTAVAV, MVGAVMMLLARFIPLVAALYL, and FIGLLIGVVVLVGALSFLPAL.

Belongs to the KdpA family. In terms of assembly, the system is composed of three essential subunits: KdpA, KdpB and KdpC.

The protein resides in the cell membrane. Part of the high-affinity ATP-driven potassium transport (or Kdp) system, which catalyzes the hydrolysis of ATP coupled with the electrogenic transport of potassium into the cytoplasm. This subunit binds the extracellular potassium ions and delivers the ions to the membrane domain of KdpB through an intramembrane tunnel. The chain is Potassium-transporting ATPase potassium-binding subunit from Listeria monocytogenes serotype 4a (strain HCC23).